A 207-amino-acid chain; its full sequence is Holliday junction branch migration complex subunit RuvA (207 aa).

The tract at residues 1-64 is domain I; the sequence is MISYIKGELA…EDECSLFGFL (64 aa). The domain II stretch occupies residues 65–143; sequence TRDDLSMFKM…LDEVFESALS (79 aa). The tract at residues 144-155 is flexible linker; the sequence is KNKKADNNSNVS. The interval 156–207 is domain III; the sequence is NVMMIRNDAVEALVSLGYSSKDALVAVKEVEDIENKDSETVLKEALKKLVKF.

This sequence belongs to the RuvA family. In terms of assembly, homotetramer. Forms an RuvA(8)-RuvB(12)-Holliday junction (HJ) complex. HJ DNA is sandwiched between 2 RuvA tetramers; dsDNA enters through RuvA and exits via RuvB. An RuvB hexamer assembles on each DNA strand where it exits the tetramer. Each RuvB hexamer is contacted by two RuvA subunits (via domain III) on 2 adjacent RuvB subunits; this complex drives branch migration. In the full resolvosome a probable DNA-RuvA(4)-RuvB(12)-RuvC(2) complex forms which resolves the HJ.

It localises to the cytoplasm. In terms of biological role, the RuvA-RuvB-RuvC complex processes Holliday junction (HJ) DNA during genetic recombination and DNA repair, while the RuvA-RuvB complex plays an important role in the rescue of blocked DNA replication forks via replication fork reversal (RFR). RuvA specifically binds to HJ cruciform DNA, conferring on it an open structure. The RuvB hexamer acts as an ATP-dependent pump, pulling dsDNA into and through the RuvAB complex. HJ branch migration allows RuvC to scan DNA until it finds its consensus sequence, where it cleaves and resolves the cruciform DNA. The chain is Holliday junction branch migration complex subunit RuvA from Lachnospira eligens (strain ATCC 27750 / DSM 3376 / VPI C15-48 / C15-B4) (Eubacterium eligens).